Here is a 1360-residue protein sequence, read N- to C-terminus: S-layer protein A (1360 aa).

The N-terminal stretch at 1-24 is a signal peptide; it reads MNKSAIRYLSLLLVFLMGGSFLAG.

Belongs to the Sulfolobales SlaA family. As to quaternary structure, the mushroom-shaped unit cells of the Sulfolobales' S-layers may consist of three SlaB subunits and six SlaA subunits.

It is found in the secreted. Its subcellular location is the cell wall. The protein resides in the S-layer. Its function is as follows. S-layer large protein. May form the highly ordered outer sheath. This chain is S-layer protein A, found in Metallosphaera sedula (strain ATCC 51363 / DSM 5348 / JCM 9185 / NBRC 15509 / TH2).